The primary structure comprises 148 residues: 18 kDa antigen (148 aa).

The sHSP domain maps to 21–131 (TSARPAVMPM…KPRKISVDRG (111 aa)).

The protein belongs to the small heat shock protein (HSP20) family.

Functionally, not known. This protein is one of the major immune reactive proteins in mycobacteria. The polypeptide is 18 kDa antigen (hsp18) (Mycobacterium leprae (strain TN)).